We begin with the raw amino-acid sequence, 353 residues long: tRNA-splicing endonuclease (353 aa).

Residues Tyr289, His300, and Lys331 contribute to the active site.

Belongs to the tRNA-intron endonuclease family. Archaeal long subfamily. In terms of assembly, homodimer.

The catalysed reaction is pretRNA = a 3'-half-tRNA molecule with a 5'-OH end + a 5'-half-tRNA molecule with a 2',3'-cyclic phosphate end + an intron with a 2',3'-cyclic phosphate and a 5'-hydroxyl terminus.. Functionally, endonuclease that removes tRNA introns. Cleaves pre-tRNA at the 5'- and 3'-splice sites to release the intron. The products are an intron and two tRNA half-molecules bearing 2',3' cyclic phosphate and 5'-OH termini. Recognizes a pseudosymmetric substrate in which 2 bulged loops of 3 bases are separated by a stem of 4 bp. The polypeptide is tRNA-splicing endonuclease (Methanosarcina mazei (strain ATCC BAA-159 / DSM 3647 / Goe1 / Go1 / JCM 11833 / OCM 88) (Methanosarcina frisia)).